Reading from the N-terminus, the 107-residue chain is Ferredoxin-1 (107 aa).

4Fe-4S ferredoxin-type domains lie at 2-30 (AFVV…YEGP) and 31-60 (NFLV…SEDE). Positions 9 and 17 each coordinate [3Fe-4S] cluster. Residues Cys21, Cys40, Cys43, and Cys46 each contribute to the [4Fe-4S] cluster site. [3Fe-4S] cluster is bound at residue Cys50. Residues 84–107 (EKKDPLPDAEDWDGVKGKLQHLER) form a disordered region. Over residues 96–107 (DGVKGKLQHLER) the composition is skewed to basic and acidic residues.

[4Fe-4S] cluster serves as cofactor. The cofactor is [3Fe-4S] cluster.

Ferredoxins are iron-sulfur proteins that transfer electrons in a wide variety of metabolic reactions. This ferredoxin could play a role in regulating gene expression by interacting directly with DNA. The chain is Ferredoxin-1 (fdxA) from Azotobacter vinelandii.